The sequence spans 396 residues: S-adenosylmethionine synthase (396 aa).

Position 16 (H16) interacts with ATP. Residue D18 coordinates Mg(2+). E44 is a K(+) binding site. 2 residues coordinate L-methionine: E57 and Q100. A flexible loop region spans residues 100 to 110; it reads QSPDINQGVDR. Residues 165-167, D240, 246-247, A263, and K267 contribute to the ATP site; these read DAK and RK. D240 serves as a coordination point for L-methionine. K271 is a binding site for L-methionine.

The protein belongs to the AdoMet synthase family. Homotetramer; dimer of dimers. Requires Mg(2+) as cofactor. It depends on K(+) as a cofactor.

Its subcellular location is the cytoplasm. It catalyses the reaction L-methionine + ATP + H2O = S-adenosyl-L-methionine + phosphate + diphosphate. It functions in the pathway amino-acid biosynthesis; S-adenosyl-L-methionine biosynthesis; S-adenosyl-L-methionine from L-methionine: step 1/1. In terms of biological role, catalyzes the formation of S-adenosylmethionine (AdoMet) from methionine and ATP. The overall synthetic reaction is composed of two sequential steps, AdoMet formation and the subsequent tripolyphosphate hydrolysis which occurs prior to release of AdoMet from the enzyme. This is S-adenosylmethionine synthase from Pseudomonas fluorescens (strain Pf0-1).